The following is a 42-amino-acid chain: Cytochrome b6-f complex subunit 7 (42 aa).

A helical transmembrane segment spans residues Ala-19–Leu-37.

It belongs to the PetM family. As to quaternary structure, the 4 large subunits of the cytochrome b6-f complex are cytochrome b6, subunit IV (17 kDa polypeptide, PetD), cytochrome f and the Rieske protein, while the 4 small subunits are PetG, PetL, PetM and PetN. The complex functions as a dimer.

It is found in the plastid. It localises to the chloroplast thylakoid membrane. Its function is as follows. Component of the cytochrome b6-f complex, which mediates electron transfer between photosystem II (PSII) and photosystem I (PSI), cyclic electron flow around PSI, and state transitions. This chain is Cytochrome b6-f complex subunit 7, found in Thalassiosira pseudonana (Marine diatom).